Consider the following 691-residue polypeptide: 1-butanol dehydrogenase (cytochrome c) (691 aa).

An N-terminal signal peptide occupies residues 1–38; sequence MLTTTFARKREESVPLRKGIQRALLGLSCLVLSTTSFA. E84 contributes to the pyrroloquinoline quinone binding site. The cysteines at positions 130 and 131 are disulfide-linked. Residues R136, T181, and 197-198 each bind pyrroloquinoline quinone; that span reads GA. The Ca(2+) site is built by E199 and D322. The active-site Proton acceptor is D322. Pyrroloquinoline quinone is bound by residues K349, 408–409, and V558; that span reads NW. The region spanning 605-684 is the Cytochrome c domain; that stretch reads DDVAEGTGLY…KIKAFILGTA (80 aa). Heme c is bound by residues C618, C621, H622, and M661.

This sequence belongs to the bacterial PQQ dehydrogenase family. In terms of assembly, monomer. Pyrroloquinoline quinone serves as cofactor. It depends on Ca(2+) as a cofactor. Heme c is required as a cofactor.

It localises to the periplasm. The enzyme catalyses butan-1-ol + 2 Fe(III)-[cytochrome c] = butanal + 2 Fe(II)-[cytochrome c] + 2 H(+). With respect to regulation, dehydrogenase activity is increased by ammonium ions. Functionally, involved in the metabolism of butane. Could be important in the detoxification of 1-butanol. Catalyzes the oxidation of 1-butanol to butyraldehyde. Also able to use 1-propanol, 2-pentanol, propionaldehyde and butyraldehyde as substrates. The sequence is that of 1-butanol dehydrogenase (cytochrome c) from Thauera butanivorans (strain ATCC 43655 / DSM 2080 / JCM 20651 / CCUG 51053 / NBRC 103042 / IAM 12574 / Bu B1211) (Pseudomonas butanovora).